The primary structure comprises 548 residues: Glucan 1,4-alpha-maltotetraohydrolase (548 aa).

The first 21 residues, 1–21, serve as a signal peptide directing secretion; that stretch reads MSHILRAAVLAAMLLPLPSMA. Ca(2+)-binding residues include aspartate 22, glutamine 23, histidine 34, aspartate 37, and glutamate 38. Residue 99–100 coordinates substrate; it reads YF. Residue asparagine 137 participates in Ca(2+) binding. Substrate is bound at residue histidine 138. Residues cysteine 161 and cysteine 171 are joined by a disulfide bond. Positions 172 and 175 each coordinate Ca(2+). A substrate-binding site is contributed by 177-181; the sequence is FIGGD. Position 183 (aspartate 183) interacts with Ca(2+). Arginine 212 is a binding site for substrate. Aspartate 214 acts as the Nucleophile in catalysis. 217–218 lines the substrate pocket; the sequence is RG. Glycine 218 lines the Ca(2+) pocket. The cysteines at positions 237 and 272 are disulfide-linked. The active-site Proton donor is the glutamate 240. 2 residues coordinate substrate: histidine 314 and glutamine 326. The region spanning 446-548 is the CBM20 domain; the sequence is GEPGALVSVS…SEGATTVGRL (103 aa). Positions 529-542 are enriched in polar residues; that stretch reads QGGANNSLTPSEGA. The disordered stretch occupies residues 529–548; that stretch reads QGGANNSLTPSEGATTVGRL.

It belongs to the glycosyl hydrolase 13 family. As to quaternary structure, monomer. Requires Ca(2+) as cofactor.

The protein localises to the secreted. The catalysed reaction is Hydrolysis of (1-&gt;4)-alpha-D-glucosidic linkages in amylaceous polysaccharides, to remove successive maltotetraose residues from the non-reducing chain ends.. It functions in the pathway glycan degradation; starch degradation. The polypeptide is Glucan 1,4-alpha-maltotetraohydrolase (amyP) (Stutzerimonas stutzeri (Pseudomonas stutzeri)).